A 402-amino-acid chain; its full sequence is Multidrug resistance protein MdtH (402 aa).

Over 1-12 (MSRVSQARNLGK) the chain is Cytoplasmic. A helical membrane pass occupies residues 13–33 (YFLLIDNMLVVLGFFVVFPLI). Residues 34–98 (SIRFIDQMGW…GFATMGIAHE (65 aa)) are Periplasmic-facing. A helical membrane pass occupies residues 99–116 (PWLLWFSCFLSGLGGTLF). Topologically, residues 117–138 (DPPRSALVVKLIRPEQRGRFFS) are cytoplasmic. Residues 139-159 (LLMMQDSAGAVIGALLGSWLL) form a helical membrane-spanning segment. Over 160–164 (QYDFR) the chain is Periplasmic. The chain crosses the membrane as a helical span at residues 165–185 (LVCATGAILFILCALFNAWLL). Residues 186–213 (PAWKLSTVRTPVREGMRRVMSDKRFVTY) lie on the Cytoplasmic side of the membrane. Residues 214–234 (VLTLAGYYMLAVQVMLMLPIM) traverse the membrane as a helical segment. Residues 235–243 (VNDIAGSPA) are Periplasmic-facing. A helical transmembrane segment spans residues 244–264 (AVKWMYAIEACLSLTLLYPIA). Over 265-276 (RWSEKRFRLEHR) the chain is Cytoplasmic. Residues 277–297 (LMAGLLVMSLSMIPIGMVGNL) traverse the membrane as a helical segment. Residues 298 to 299 (QQ) are Periplasmic-facing. Residues 300 to 320 (LFTLICAFYIGSVIAEPARET) form a helical membrane-spanning segment. Topologically, residues 321–339 (LSASLADARARGSYMGFSR) are cytoplasmic. The helical transmembrane segment at 340–360 (LGLAIGGAIGYIGGGWLFDMG) threads the bilayer. Topologically, residues 361-367 (KALTQPE) are periplasmic. Residues 368–388 (LPWMMLGIIGFITFLALGWQF) form a helical membrane-spanning segment. Residues 389–402 (SHKRTPRRMLEPGA) lie on the Cytoplasmic side of the membrane.

It belongs to the major facilitator superfamily. DHA1 family. MdtH (TC 2.A.1.2.21) subfamily.

The protein resides in the cell inner membrane. This is Multidrug resistance protein MdtH from Salmonella paratyphi C (strain RKS4594).